The primary structure comprises 589 residues: V-type ATP synthase alpha chain 1 (589 aa).

239–246 (GPFGAGKT) provides a ligand contact to ATP.

The protein belongs to the ATPase alpha/beta chains family.

It catalyses the reaction ATP + H2O + 4 H(+)(in) = ADP + phosphate + 5 H(+)(out). Its function is as follows. Produces ATP from ADP in the presence of a proton gradient across the membrane. The V-type alpha chain is a catalytic subunit. In Treponema pallidum (strain Nichols), this protein is V-type ATP synthase alpha chain 1 (atpA1).